A 53-amino-acid polypeptide reads, in one-letter code: Large ribosomal subunit protein bL33A (53 aa).

It belongs to the bacterial ribosomal protein bL33 family.

This chain is Large ribosomal subunit protein bL33A, found in Mycoplasmoides gallisepticum (strain R(low / passage 15 / clone 2)) (Mycoplasma gallisepticum).